The chain runs to 1830 residues: Dedicator of cytokinesis protein 2 (1830 aa).

The SH3 domain maps to 8 to 69 (DKERHGVAIY…PKSFIHIKEV (62 aa)). K304 carries the N6-acetyllysine modification. One can recognise a C2 DOCK-type domain in the interval 423-607 (RNDIYITLLQ…DVFSISTLVC (185 aa)). A phosphoserine mark is found at S588 and S593. K738 carries the N6-acetyllysine modification. An interaction with CRKL region spans residues 939–1476 (CMTAILNQMG…TSFVTAYKLP (538 aa)). Residues 1211-1622 (YKDNNREEMY…VEKEYGVREM (412 aa)) form the DOCKER domain. Positions 1651–1665 (MNSDCSTPSKPTSES) are enriched in polar residues. Positions 1651-1704 (MNSDCSTPSKPTSESFDLELASPKTPRVEQEEPISPGSTLPEVKLRRSKKRTKR) are disordered. Phosphoserine occurs at positions 1685, 1706, 1731, and 1784.

This sequence belongs to the DOCK family. Homodimer. Interacts with RAC1 and RAC2. Interacts with CRKL and VAV. Interacts with CD3Z. In terms of tissue distribution, specifically expressed in hematopoietic cells. Highly expressed in peripheral blood leukocytes, and expressed at intermediate level in thymus and spleen. Expressed at very low level in the small intestine and colon.

Its subcellular location is the endomembrane system. The protein localises to the cytoplasm. It localises to the cytoskeleton. Functionally, involved in cytoskeletal rearrangements required for lymphocyte migration in response of chemokines. Activates RAC1 and RAC2, but not CDC42, by functioning as a guanine nucleotide exchange factor (GEF), which exchanges bound GDP for free GTP. May also participate in IL2 transcriptional activation via the activation of RAC2. The chain is Dedicator of cytokinesis protein 2 (DOCK2) from Homo sapiens (Human).